The sequence spans 209 residues: Glycerol-3-phosphate acyltransferase (209 aa).

5 helical membrane-spanning segments follow: residues 5-25, 50-70, 74-94, 115-135, and 151-171; these read IIGMIIIAYLLGSIPTGLWIG, LGFKAGVVVLFIDILKGTLAA, YFLGISGTVNPLLIGLFASLG, ILLAYNPLLFVVACLIFIFVL, and AIFIIALFIHAWILAIVAGIL.

This sequence belongs to the PlsY family. Probably interacts with PlsX.

Its subcellular location is the cell membrane. The catalysed reaction is an acyl phosphate + sn-glycerol 3-phosphate = a 1-acyl-sn-glycero-3-phosphate + phosphate. The protein operates within lipid metabolism; phospholipid metabolism. Catalyzes the transfer of an acyl group from acyl-phosphate (acyl-PO(4)) to glycerol-3-phosphate (G3P) to form lysophosphatidic acid (LPA). This enzyme utilizes acyl-phosphate as fatty acyl donor, but not acyl-CoA or acyl-ACP. In Limosilactobacillus reuteri (strain DSM 20016) (Lactobacillus reuteri), this protein is Glycerol-3-phosphate acyltransferase.